The following is a 342-amino-acid chain: Holliday junction branch migration complex subunit RuvB (342 aa).

The interval 1–184 (MEENFDIREQ…FGINLHLEYY (184 aa)) is large ATPase domain (RuvB-L). ATP is bound by residues Leu-23, Arg-24, Gly-65, Lys-68, Thr-69, Thr-70, 131–133 (EDY), Arg-174, Tyr-184, and Arg-221. A Mg(2+)-binding site is contributed by Thr-69. The interval 185–255 (DDDVLTSIIR…IARFALEALN (71 aa)) is small ATPAse domain (RuvB-S). The head domain (RuvB-H) stretch occupies residues 258 to 342 (RYGLDEIDNK…YNSQKTLFDD (85 aa)). DNA is bound by residues Arg-313 and Arg-318.

Belongs to the RuvB family. Homohexamer. Forms an RuvA(8)-RuvB(12)-Holliday junction (HJ) complex. HJ DNA is sandwiched between 2 RuvA tetramers; dsDNA enters through RuvA and exits via RuvB. An RuvB hexamer assembles on each DNA strand where it exits the tetramer. Each RuvB hexamer is contacted by two RuvA subunits (via domain III) on 2 adjacent RuvB subunits; this complex drives branch migration. In the full resolvosome a probable DNA-RuvA(4)-RuvB(12)-RuvC(2) complex forms which resolves the HJ.

The protein localises to the cytoplasm. The enzyme catalyses ATP + H2O = ADP + phosphate + H(+). The RuvA-RuvB-RuvC complex processes Holliday junction (HJ) DNA during genetic recombination and DNA repair, while the RuvA-RuvB complex plays an important role in the rescue of blocked DNA replication forks via replication fork reversal (RFR). RuvA specifically binds to HJ cruciform DNA, conferring on it an open structure. The RuvB hexamer acts as an ATP-dependent pump, pulling dsDNA into and through the RuvAB complex. RuvB forms 2 homohexamers on either side of HJ DNA bound by 1 or 2 RuvA tetramers; 4 subunits per hexamer contact DNA at a time. Coordinated motions by a converter formed by DNA-disengaged RuvB subunits stimulates ATP hydrolysis and nucleotide exchange. Immobilization of the converter enables RuvB to convert the ATP-contained energy into a lever motion, pulling 2 nucleotides of DNA out of the RuvA tetramer per ATP hydrolyzed, thus driving DNA branch migration. The RuvB motors rotate together with the DNA substrate, which together with the progressing nucleotide cycle form the mechanistic basis for DNA recombination by continuous HJ branch migration. Branch migration allows RuvC to scan DNA until it finds its consensus sequence, where it cleaves and resolves cruciform DNA. This chain is Holliday junction branch migration complex subunit RuvB, found in Phocaeicola vulgatus (strain ATCC 8482 / DSM 1447 / JCM 5826 / CCUG 4940 / NBRC 14291 / NCTC 11154) (Bacteroides vulgatus).